The primary structure comprises 344 residues: Heat-inducible transcription repressor HrcA (344 aa).

Belongs to the HrcA family.

Negative regulator of class I heat shock genes (grpE-dnaK-dnaJ and groELS operons). Prevents heat-shock induction of these operons. This Streptococcus equi subsp. zooepidemicus (strain H70) protein is Heat-inducible transcription repressor HrcA.